We begin with the raw amino-acid sequence, 188 residues long: Ribosome maturation factor RimM (188 aa).

The 74-residue stretch at 93 to 166 (EDEYYDHQLI…RAVIDPPPGL (74 aa)) folds into the PRC barrel domain.

Belongs to the RimM family. Binds ribosomal protein uS19.

The protein localises to the cytoplasm. In terms of biological role, an accessory protein needed during the final step in the assembly of 30S ribosomal subunit, possibly for assembly of the head region. Essential for efficient processing of 16S rRNA. May be needed both before and after RbfA during the maturation of 16S rRNA. It has affinity for free ribosomal 30S subunits but not for 70S ribosomes. The protein is Ribosome maturation factor RimM of Streptomyces coelicolor (strain ATCC BAA-471 / A3(2) / M145).